Consider the following 668-residue polypeptide: Alpha-1,4-glucan:maltose-1-phosphate maltosyltransferase (668 aa).

The interval 263–288 (RKGRNNSLTPAPDDPGSPYAIGSEEG) is disordered. Alpha-maltose 1-phosphate is bound by residues Lys264, Gln324, and Asp359. The active-site Nucleophile is Asp395. Residue Asn396 participates in alpha-maltose 1-phosphate binding. Residue Glu424 is the Proton donor of the active site. Alpha-maltose 1-phosphate is bound at residue 535 to 536 (KY).

Belongs to the glycosyl hydrolase 13 family. GlgE subfamily. In terms of assembly, homodimer.

The catalysed reaction is alpha-maltose 1-phosphate + [(1-&gt;4)-alpha-D-glucosyl](n) = [(1-&gt;4)-alpha-D-glucosyl](n+2) + phosphate. Its function is as follows. Maltosyltransferase that uses maltose 1-phosphate (M1P) as the sugar donor to elongate linear or branched alpha-(1-&gt;4)-glucans. Is involved in a branched alpha-glucan biosynthetic pathway from trehalose, together with TreS, Mak and GlgB. The polypeptide is Alpha-1,4-glucan:maltose-1-phosphate maltosyltransferase (Cereibacter sphaeroides (strain ATCC 17023 / DSM 158 / JCM 6121 / CCUG 31486 / LMG 2827 / NBRC 12203 / NCIMB 8253 / ATH 2.4.1.) (Rhodobacter sphaeroides)).